Consider the following 407-residue polypeptide: RING finger protein 44 (407 aa).

Residues 26–58 (LSSSPGQLWGRPSNLSVEEHRASAPAGRSPRML) form a disordered region. Residues 355–396 (CVVCFSDFEVRQLLRVLPCNHEFHAKCVDKWLKANRTCPICR) form an RING-type; atypical zinc finger.

This is RING finger protein 44 (Rnf44) from Mus musculus (Mouse).